Reading from the N-terminus, the 863-residue chain is Glycogen phosphorylase (863 aa).

An N6-(pyridoxal phosphate)lysine modification is found at K618.

Belongs to the glycogen phosphorylase family. Pyridoxal 5'-phosphate is required as a cofactor.

It carries out the reaction [(1-&gt;4)-alpha-D-glucosyl](n) + phosphate = [(1-&gt;4)-alpha-D-glucosyl](n-1) + alpha-D-glucose 1-phosphate. Its function is as follows. Phosphorylase is an important allosteric enzyme in carbohydrate metabolism. Enzymes from different sources differ in their regulatory mechanisms and in their natural substrates. However, all known phosphorylases share catalytic and structural properties. The sequence is that of Glycogen phosphorylase (glgP) from Mycobacterium tuberculosis (strain ATCC 25618 / H37Rv).